A 423-amino-acid chain; its full sequence is T-box transcription factor T-A (423 aa).

The segment at residues 44-212 is a DNA-binding region (T-box); it reads LWTKFKELTN…HNPFAKAFLD (169 aa). The segment covering 215–227 has biased composition (basic and acidic residues); that stretch reads ERSDHKEVPDHST. Disordered stretches follow at residues 215 to 234 and 280 to 304; these read ERSDHKEVPDHSTDNQQSGY and AAPYPSHYSHRSTTTNNYMDNSSGS. Polar residues predominate over residues 290–304; that stretch reads RSTTTNNYMDNSSGS.

Monomer. Binds DNA as a monomer. First expressed at the dorsal side of the blastula embryo. Expressed in the germ ring, shield and chordamesoderm during gastrulation and is restricted to the notochord and tailbud during somitogenesis (at protein level).

Its subcellular location is the nucleus. Involved in the transcriptional regulation of genes required for mesoderm differentiation, including itself. Indispensable for the formation of the notochord and the tail structure. Functions together with tbx16/spadetail in development of trunk and tail mesoderm. Functions by itself early in development to repress medial floor plate and promote notochord fate but at later times, functions together with tbx16/spadetail to promote medial floor plate formation. Acts in a parallel pathway to, but cooperates with, non-canonical wnt-signaling during tail formation. Required for the morphogenesis of Kupffer's vesicle and regulates left-right asymmetry. In Danio rerio (Zebrafish), this protein is T-box transcription factor T-A (tbxta).